Consider the following 107-residue polypeptide: UPF0060 membrane protein A1S_1909 (107 aa).

Transmembrane regions (helical) follow at residues 2–22 (FGLFIITAIAEILGCYFPYLI), 28–48 (SAWLWLPTALSLAVFVWLLTL), 56–76 (IYAAYGGIYIFTALMWLRFVD), and 85–105 (ILGGVIVLCGAGLIILQPQGL).

It belongs to the UPF0060 family.

The protein localises to the cell inner membrane. This is UPF0060 membrane protein A1S_1909 from Acinetobacter baumannii (strain ATCC 17978 / DSM 105126 / CIP 53.77 / LMG 1025 / NCDC KC755 / 5377).